A 394-amino-acid polypeptide reads, in one-letter code: Putative fimbrial assembly protein FimD, serogroup D (394 aa).

The sequence is that of Putative fimbrial assembly protein FimD, serogroup D (fimD) from Dichelobacter nodosus (Bacteroides nodosus).